The primary structure comprises 172 residues: Cyclin-L1 (172 aa).

The tract at residues 1–36 (MASGPHSTATAAAAASSAAPSAGGSSSGTTTTTTTT) is disordered. Residues 88–168 (ELIQAAGILL…LRGKSDQLHL (81 aa)) form a cyclin-like region.

It belongs to the cyclin family. Cyclin L subfamily. In terms of assembly, interacts with POLR2A via its hyperphosphorylated C-terminal domain (CTD). Interacts with CDK11A, CDK11B, CDK12 and CDK13. May form a ternary complex with CDK11B and casein kinase II (CKII). Interacts with pre-mRNA-splicing factors, including at least SRSF1, SRSF2 and SRSF7/SLU7.

The protein resides in the nucleus speckle. It localises to the nucleus. It is found in the nucleoplasm. In terms of biological role, involved in pre-mRNA splicing. Functions in association with cyclin-dependent kinases (CDKs). May play a role in the regulation of RNA polymerase II (pol II). Inhibited by the CDK-specific inhibitor CDKN1A/p21. This Pongo abelii (Sumatran orangutan) protein is Cyclin-L1 (CCNL1).